The primary structure comprises 142 residues: Heat shock protein HSP.16.4 (142 aa).

Residues 27–142 form the sHSP domain; the sequence is NLFNDLKSNL…KEIKTSIPIE (116 aa).

It belongs to the small heat shock protein (HSP20) family.

The protein localises to the cytoplasm. The polypeptide is Heat shock protein HSP.16.4 (Streptococcus thermophilus).